The following is a 308-amino-acid chain: Oxygen-dependent coproporphyrinogen-III oxidase (308 aa).

Ser-100 contributes to the substrate binding site. 2 residues coordinate a divalent metal cation: His-104 and His-114. His-114 acts as the Proton donor in catalysis. Residue 116-118 coordinates substrate; it reads NFR. The a divalent metal cation site is built by His-153 and His-183. Positions 248–283 are important for dimerization; it reads YVEFNLVFDRGTIFGLQSGGRTESILSSMPPMASWR. Substrate is bound at residue 266-268; sequence GGR.

The protein belongs to the aerobic coproporphyrinogen-III oxidase family. In terms of assembly, homodimer. Requires a divalent metal cation as cofactor.

It localises to the cytoplasm. It catalyses the reaction coproporphyrinogen III + O2 + 2 H(+) = protoporphyrinogen IX + 2 CO2 + 2 H2O. It participates in porphyrin-containing compound metabolism; protoporphyrin-IX biosynthesis; protoporphyrinogen-IX from coproporphyrinogen-III (O2 route): step 1/1. In terms of biological role, involved in the heme biosynthesis. Catalyzes the aerobic oxidative decarboxylation of propionate groups of rings A and B of coproporphyrinogen-III to yield the vinyl groups in protoporphyrinogen-IX. The protein is Oxygen-dependent coproporphyrinogen-III oxidase of Francisella tularensis subsp. novicida (strain U112).